A 292-amino-acid chain; its full sequence is Probable endonuclease 4 (292 aa).

The Zn(2+) site is built by histidine 69, histidine 109, glutamate 145, aspartate 179, histidine 182, histidine 216, aspartate 229, histidine 231, and glutamate 261.

It belongs to the AP endonuclease 2 family. Requires Zn(2+) as cofactor.

It catalyses the reaction Endonucleolytic cleavage to 5'-phosphooligonucleotide end-products.. Its function is as follows. Endonuclease IV plays a role in DNA repair. It cleaves phosphodiester bonds at apurinic or apyrimidinic (AP) sites, generating a 3'-hydroxyl group and a 5'-terminal sugar phosphate. The protein is Probable endonuclease 4 of Desulfotalea psychrophila (strain LSv54 / DSM 12343).